Consider the following 184-residue polypeptide: DOMON domain-containing protein CBG21755 (184 aa).

A signal peptide spans 1 to 20; that stretch reads MIVPISLLFLFLSFVPFSYS. Residues 28 to 145 enclose the DOMON domain; sequence EVASMSWMVK…CVNWIVVPGG (118 aa). Asn-49 is a glycosylation site (N-linked (GlcNAc...) asparagine).

Its subcellular location is the secreted. This Caenorhabditis briggsae protein is DOMON domain-containing protein CBG21755.